The following is a 137-amino-acid chain: uncharacterized protein (137 aa).

Residues 75-91 (MFLDAMVILAVASGVSL) form a helical membrane-spanning segment. The interval 93–116 (PQLPGRRSHNASTPGAKKPGKDHG) is disordered.

It is found in the membrane. This is an uncharacterized protein from Saccharomyces cerevisiae (strain ATCC 204508 / S288c) (Baker's yeast).